Here is a 415-residue protein sequence, read N- to C-terminus: S-inosyl-L-homocysteine hydrolase (415 aa).

Residues D123 and E148 each coordinate substrate. 149–151 is a binding site for NAD(+); sequence TTT. The substrate site is built by K178 and D182. NAD(+)-binding positions include N183, 212 to 217, E235, 291 to 293, and N337; these read GYGWCG and AGH.

Belongs to the adenosylhomocysteinase family. NAD(+) is required as a cofactor.

It localises to the cytoplasm. It carries out the reaction S-inosyl-L-homocysteine + H2O = L-homocysteine + inosine. The protein operates within amino-acid biosynthesis; S-adenosyl-L-methionine biosynthesis. In terms of biological role, catalyzes the hydrolysis of S-inosyl-L-homocysteine (SIH) to L-homocysteine (Hcy) and inosine. Likely functions in a S-adenosyl-L-methionine (SAM) recycling pathway from S-adenosyl-L-homocysteine (SAH) produced from SAM-dependent methylation reactions. Can also catalyze the reverse reaction in vitro, i.e. the synthesis of SIH from Hcy and inosine. The protein is S-inosyl-L-homocysteine hydrolase of Methanococcus maripaludis (strain DSM 14266 / JCM 13030 / NBRC 101832 / S2 / LL).